Consider the following 387-residue polypeptide: 3-ketoacyl-CoA thiolase (387 aa).

The active-site Acyl-thioester intermediate is the C91. Active-site proton acceptor residues include H343 and C373.

Belongs to the thiolase-like superfamily. Thiolase family. As to quaternary structure, heterotetramer of two alpha chains (FadB) and two beta chains (FadA).

Its subcellular location is the cytoplasm. It carries out the reaction an acyl-CoA + acetyl-CoA = a 3-oxoacyl-CoA + CoA. It participates in lipid metabolism; fatty acid beta-oxidation. In terms of biological role, catalyzes the final step of fatty acid oxidation in which acetyl-CoA is released and the CoA ester of a fatty acid two carbons shorter is formed. The protein is 3-ketoacyl-CoA thiolase of Vibrio vulnificus (strain CMCP6).